The sequence spans 877 residues: Bifunctional uridylyltransferase/uridylyl-removing enzyme (877 aa).

Positions Met1–Pro335 are uridylyltransferase. A uridylyl-removing region spans residues Val336–Val695. The region spanning Val454–Leu576 is the HD domain. ACT domains follow at residues Glu696–Arg778 and Ile805–Gln877.

Belongs to the GlnD family. Mg(2+) is required as a cofactor.

The enzyme catalyses [protein-PII]-L-tyrosine + UTP = [protein-PII]-uridylyl-L-tyrosine + diphosphate. The catalysed reaction is [protein-PII]-uridylyl-L-tyrosine + H2O = [protein-PII]-L-tyrosine + UMP + H(+). With respect to regulation, uridylyltransferase (UTase) activity is inhibited by glutamine, while glutamine activates uridylyl-removing (UR) activity. Modifies, by uridylylation and deuridylylation, the PII regulatory proteins (GlnB and homologs), in response to the nitrogen status of the cell that GlnD senses through the glutamine level. Under low glutamine levels, catalyzes the conversion of the PII proteins and UTP to PII-UMP and PPi, while under higher glutamine levels, GlnD hydrolyzes PII-UMP to PII and UMP (deuridylylation). Thus, controls uridylylation state and activity of the PII proteins, and plays an important role in the regulation of nitrogen fixation and metabolism. The sequence is that of Bifunctional uridylyltransferase/uridylyl-removing enzyme from Methylococcus capsulatus (strain ATCC 33009 / NCIMB 11132 / Bath).